Reading from the N-terminus, the 715-residue chain is Fatty acid oxidation complex subunit alpha (715 aa).

The tract at residues 1–190 is enoyl-CoA hydratase/isomerase; it reads MIYEGKAITV…KVGAVDAVVA (190 aa). Residue Asp-297 coordinates substrate. Positions 312-715 are 3-hydroxyacyl-CoA dehydrogenase; it reads HDVKQAAVLG…MAKNGQRFFN (404 aa). NAD(+) contacts are provided by residues Met-325, Asp-344, 401 to 403, Lys-408, and Ser-430; that span reads VVE. Residue His-451 is the For 3-hydroxyacyl-CoA dehydrogenase activity of the active site. Asn-454 contacts NAD(+). Substrate is bound by residues Asn-501 and Tyr-660.

It in the N-terminal section; belongs to the enoyl-CoA hydratase/isomerase family. The protein in the C-terminal section; belongs to the 3-hydroxyacyl-CoA dehydrogenase family. As to quaternary structure, heterotetramer of two alpha chains (FadB) and two beta chains (FadA).

It catalyses the reaction a (3S)-3-hydroxyacyl-CoA + NAD(+) = a 3-oxoacyl-CoA + NADH + H(+). The catalysed reaction is a (3S)-3-hydroxyacyl-CoA = a (2E)-enoyl-CoA + H2O. It carries out the reaction a 4-saturated-(3S)-3-hydroxyacyl-CoA = a (3E)-enoyl-CoA + H2O. The enzyme catalyses (3S)-3-hydroxybutanoyl-CoA = (3R)-3-hydroxybutanoyl-CoA. It catalyses the reaction a (3Z)-enoyl-CoA = a 4-saturated (2E)-enoyl-CoA. The catalysed reaction is a (3E)-enoyl-CoA = a 4-saturated (2E)-enoyl-CoA. It participates in lipid metabolism; fatty acid beta-oxidation. Its function is as follows. Involved in the aerobic and anaerobic degradation of long-chain fatty acids via beta-oxidation cycle. Catalyzes the formation of 3-oxoacyl-CoA from enoyl-CoA via L-3-hydroxyacyl-CoA. It can also use D-3-hydroxyacyl-CoA and cis-3-enoyl-CoA as substrate. The chain is Fatty acid oxidation complex subunit alpha from Pseudomonas putida (strain GB-1).